We begin with the raw amino-acid sequence, 37 residues long: M-oxotoxin-Ot2b (37 aa).

In terms of tissue distribution, expressed by the venom gland.

It is found in the secreted. In terms of biological role, disrupts biological membranes, particularly those rich in phosphocholine. Has antimicrobial activity against Gram-negative bacterium E.coli, Gram-positive bacteria B.subtilis and S.aureus, and hemolytic activity against sheep, pig and guinea pig red blood cells. Has insecticidal activity against S.frugiperda ovarian cells by opening non-selective ion channels. Enhances the insecticidal activity of spider venom neurotoxic peptides. This Oxyopes takobius (Lynx spider) protein is M-oxotoxin-Ot2b.